The primary structure comprises 572 residues: Urease subunit alpha (572 aa).

A Urease domain is found at Ala-134–Gly-572. Ni(2+) is bound by residues His-139, His-141, and Lys-222. Residue Lys-222 is modified to N6-carboxylysine. His-224 is a binding site for substrate. Positions 251 and 277 each coordinate Ni(2+). Catalysis depends on His-325, which acts as the Proton donor. A Ni(2+)-binding site is contributed by Asp-365.

It belongs to the metallo-dependent hydrolases superfamily. Urease alpha subunit family. In terms of assembly, heterotrimer of UreA (gamma), UreB (beta) and UreC (alpha) subunits. Three heterotrimers associate to form the active enzyme. Ni cation serves as cofactor. Carboxylation allows a single lysine to coordinate two nickel ions.

The protein localises to the cytoplasm. It catalyses the reaction urea + 2 H2O + H(+) = hydrogencarbonate + 2 NH4(+). Its pathway is nitrogen metabolism; urea degradation; CO(2) and NH(3) from urea (urease route): step 1/1. The protein is Urease subunit alpha of Yersinia pseudotuberculosis serotype O:1b (strain IP 31758).